A 372-amino-acid chain; its full sequence is Probable basic-leucine zipper transcription factor G (372 aa).

Disordered regions lie at residues Met-1–Gln-20 and Thr-176–Glu-234. 2 stretches are compositionally biased toward low complexity: residues Gln-11–Gln-20 and Thr-176–Thr-215. Over residues Ile-223–Glu-234 the composition is skewed to polar residues. The region spanning Glu-277–Leu-340 is the bZIP domain. The basic motif stretch occupies residues Lys-279–Arg-301. A leucine-zipper region spans residues Leu-305–Leu-340.

This sequence belongs to the bZIP family.

It localises to the nucleus. Probable transcriptional regulator. This Dictyostelium discoideum (Social amoeba) protein is Probable basic-leucine zipper transcription factor G (bzpG).